Here is a 186-residue protein sequence, read N- to C-terminus: Tumor necrosis factor alpha-induced protein 8-like protein 2 (186 aa).

This sequence belongs to the TNFAIP8 family. TNFAIP8L2 subfamily.

In terms of biological role, acts as a negative regulator of innate and adaptive immunity by maintaining immune homeostasis. Negative regulator of Toll-like receptor and T-cell receptor function. Prevents hyperresponsiveness of the immune system and maintains immune homeostasis. Inhibits jun/ap1 and NF-kappa-B activation. Promotes Fas-induced apoptosis. The protein is Tumor necrosis factor alpha-induced protein 8-like protein 2 (tnfaip8l2) of Xenopus tropicalis (Western clawed frog).